The sequence spans 260 residues: MIPSLWISKTGLDAQQINMNVISNNLANVSTNGFKRSRAVFEDLMYQTMRQAGTNSSIDTTLPSGLQLGTGVRPVSTEKIYSQGNLSKTDSSKDVAINGPGFFQVQLPDGNIAYTRDGSFQLDQNGQLVTNSGYPIIPEINIPPNSINMNIGRDGIVSVTIQGQTQPISIGQLNLINFVNHSGLESLGENLYQETQASGNPIDTTPGLNGTGLLYQGYVETSNVNVAEELVNMIQTQRAYEINSKSINTSDQMLQKLSQL.

This sequence belongs to the flagella basal body rod proteins family. As to quaternary structure, the basal body constitutes a major portion of the flagellar organelle and consists of four rings (L,P,S, and M) mounted on a central rod. The rod consists of about 26 subunits of FlgG in the distal portion, and FlgB, FlgC and FlgF are thought to build up the proximal portion of the rod with about 6 subunits each.

Its subcellular location is the bacterial flagellum basal body. The polypeptide is Flagellar basal-body rod protein FlgG (flgG) (Buchnera aphidicola subsp. Schizaphis graminum (strain Sg)).